The chain runs to 331 residues: MAQLFYDSDADLSLLNGKTVAIVGYGSQGHAHALNLKDSGVDVVVGLYEGSRSAEKARTDGLEVLSVAEASAKADWIMVLLPDEFQKDVYAKEIAPHLSSGKVLSFAHGFNIRFGLIQPPADVDVVMIAPKGPGHTVRWEYQNGQGVPALFAIEQDASGQARALAMAYAKGIGGTRAGILETNFKEETETDLFGEQAVLCGGLSELVKAGFETLVEAGYQPELAYFECLHEVKLIVDLMVKGGLTAMRDSISNTAEYGDYVSGPRLINADTKAEMKRILADIQDGTFAKNFVAECESGKPEMKKIRDRDAAHPIEQVGKGLRAMFSWLKTA.

A KARI N-terminal Rossmann domain is found at 2-182 (AQLFYDSDAD…GGTRAGILET (181 aa)). Residues 25 to 28 (YGSQ), serine 51, serine 53, and 83 to 86 (DEFQ) each bind NADP(+). Histidine 108 is a catalytic residue. Glycine 134 contacts NADP(+). The region spanning 183–328 (NFKEETETDL…KGLRAMFSWL (146 aa)) is the KARI C-terminal knotted domain. 4 residues coordinate Mg(2+): aspartate 191, glutamate 195, glutamate 227, and glutamate 231. Serine 252 contributes to the substrate binding site.

Belongs to the ketol-acid reductoisomerase family. Requires Mg(2+) as cofactor.

It carries out the reaction (2R)-2,3-dihydroxy-3-methylbutanoate + NADP(+) = (2S)-2-acetolactate + NADPH + H(+). The catalysed reaction is (2R,3R)-2,3-dihydroxy-3-methylpentanoate + NADP(+) = (S)-2-ethyl-2-hydroxy-3-oxobutanoate + NADPH + H(+). The protein operates within amino-acid biosynthesis; L-isoleucine biosynthesis; L-isoleucine from 2-oxobutanoate: step 2/4. Its pathway is amino-acid biosynthesis; L-valine biosynthesis; L-valine from pyruvate: step 2/4. Functionally, involved in the biosynthesis of branched-chain amino acids (BCAA). Catalyzes an alkyl-migration followed by a ketol-acid reduction of (S)-2-acetolactate (S2AL) to yield (R)-2,3-dihydroxy-isovalerate. In the isomerase reaction, S2AL is rearranged via a Mg-dependent methyl migration to produce 3-hydroxy-3-methyl-2-ketobutyrate (HMKB). In the reductase reaction, this 2-ketoacid undergoes a metal-dependent reduction by NADPH to yield (R)-2,3-dihydroxy-isovalerate. This Prochlorococcus marinus (strain MIT 9303) protein is Ketol-acid reductoisomerase (NADP(+)).